Consider the following 126-residue polypeptide: Large ribosomal subunit protein bL12 (126 aa).

It belongs to the bacterial ribosomal protein bL12 family. Homodimer. Part of the ribosomal stalk of the 50S ribosomal subunit. Forms a multimeric L10(L12)X complex, where L10 forms an elongated spine to which 2 to 4 L12 dimers bind in a sequential fashion. Binds GTP-bound translation factors.

Forms part of the ribosomal stalk which helps the ribosome interact with GTP-bound translation factors. Is thus essential for accurate translation. The sequence is that of Large ribosomal subunit protein bL12 from Methylorubrum populi (strain ATCC BAA-705 / NCIMB 13946 / BJ001) (Methylobacterium populi).